The following is a 416-amino-acid chain: 4-hydroxy-3-methylbut-2-en-1-yl diphosphate synthase (flavodoxin) (416 aa).

Residues C304, C307, C350, and E357 each coordinate [4Fe-4S] cluster.

This sequence belongs to the IspG family. The cofactor is [4Fe-4S] cluster.

The catalysed reaction is (2E)-4-hydroxy-3-methylbut-2-enyl diphosphate + oxidized [flavodoxin] + H2O + 2 H(+) = 2-C-methyl-D-erythritol 2,4-cyclic diphosphate + reduced [flavodoxin]. It participates in isoprenoid biosynthesis; isopentenyl diphosphate biosynthesis via DXP pathway; isopentenyl diphosphate from 1-deoxy-D-xylulose 5-phosphate: step 5/6. Its function is as follows. Converts 2C-methyl-D-erythritol 2,4-cyclodiphosphate (ME-2,4cPP) into 1-hydroxy-2-methyl-2-(E)-butenyl 4-diphosphate. This chain is 4-hydroxy-3-methylbut-2-en-1-yl diphosphate synthase (flavodoxin), found in Burkholderia pseudomallei (strain K96243).